Reading from the N-terminus, the 293-residue chain is Ribosomal RNA small subunit methyltransferase A (293 aa).

Residues Asn-36, Leu-38, Gly-63, Glu-84, Asp-111, and Asn-132 each contribute to the S-adenosyl-L-methionine site.

It belongs to the class I-like SAM-binding methyltransferase superfamily. rRNA adenine N(6)-methyltransferase family. RsmA subfamily.

The protein localises to the cytoplasm. The catalysed reaction is adenosine(1518)/adenosine(1519) in 16S rRNA + 4 S-adenosyl-L-methionine = N(6)-dimethyladenosine(1518)/N(6)-dimethyladenosine(1519) in 16S rRNA + 4 S-adenosyl-L-homocysteine + 4 H(+). In terms of biological role, specifically dimethylates two adjacent adenosines (A1518 and A1519) in the loop of a conserved hairpin near the 3'-end of 16S rRNA in the 30S particle. May play a critical role in biogenesis of 30S subunits. The sequence is that of Ribosomal RNA small subunit methyltransferase A from Treponema denticola (strain ATCC 35405 / DSM 14222 / CIP 103919 / JCM 8153 / KCTC 15104).